A 642-amino-acid polypeptide reads, in one-letter code: Stress-activated map kinase-interacting protein 1 homolog (642 aa).

In terms of domain architecture, CRIM spans 189–314 (ARIREVIGYC…EREPLFQGLL (126 aa)). The interval 603–642 (IVSPSSDAPSRSSNGKNGGKFRKMSSLMASVMGRRKSDSK) is disordered. Residues 605–615 (SPSSDAPSRSS) are compositionally biased toward low complexity.

It belongs to the SIN1 family. Component of the target of rapamycin complex 2 (TORC2).

Functionally, component of the target of rapamycin complex 2 (TORC2), which transduces signals from growth factors to pathways involved in proliferation, cytoskeletal organization and anabolic output. In response to growth factors, TORC2 phosphorylates and activates AGC protein kinase family members, such as Akt1. Within the TORC2 complex, sinh-1 acts as a substrate adapter which recognizes and binds AGC protein kinase family members for phosphorylation by mTor. The sequence is that of Stress-activated map kinase-interacting protein 1 homolog (sinh-1) from Caenorhabditis elegans.